A 100-amino-acid chain; its full sequence is UPF0213 protein YhbQ (100 aa).

One can recognise a GIY-YIG domain in the interval 2–77; sequence TPWFLYLIRT…KQLTKRQKER (76 aa).

The protein belongs to the UPF0213 family.

The sequence is that of UPF0213 protein YhbQ from Escherichia coli O127:H6 (strain E2348/69 / EPEC).